A 61-amino-acid chain; its full sequence is Cobrotoxin-c (61 aa).

4 disulfide bridges follow: Cys-3–Cys-23, Cys-17–Cys-40, Cys-42–Cys-53, and Cys-54–Cys-59.

The protein belongs to the three-finger toxin family. Short-chain subfamily. Type I alpha-neurotoxin sub-subfamily. Expressed by the venom gland.

It is found in the secreted. Produces peripheral paralysis by blocking neuromuscular transmission at the postsynaptic site. Binds to the nicotinic acetylcholine receptor. This chain is Cobrotoxin-c, found in Naja kaouthia (Monocled cobra).